We begin with the raw amino-acid sequence, 321 residues long: Cytochrome f (321 aa).

A signal peptide spans 1 to 35 (MQNTNTLNWINKLIYLSISIPIFFLILVTTYPNSV). Heme contacts are provided by Y38, C58, C61, and H62. Residues 287 to 307 (MEGLILFFISVILAQVFLVLK) form a helical membrane-spanning segment.

This sequence belongs to the cytochrome f family. The 4 large subunits of the cytochrome b6-f complex are cytochrome b6, subunit IV (17 kDa polypeptide, petD), cytochrome f and the Rieske protein, while the 4 small subunits are PetG, PetL, PetM and PetN. The complex functions as a dimer. It depends on heme as a cofactor.

The protein resides in the plastid. It is found in the chloroplast thylakoid membrane. Functionally, component of the cytochrome b6-f complex, which mediates electron transfer between photosystem II (PSII) and photosystem I (PSI), cyclic electron flow around PSI, and state transitions. The protein is Cytochrome f of Chara vulgaris (Common stonewort).